We begin with the raw amino-acid sequence, 615 residues long: Nuclear cap-binding protein subunit 3 (615 aa).

Lysine 12 participates in a covalent cross-link: Glycyl lysine isopeptide (Lys-Gly) (interchain with G-Cter in SUMO2). A compositionally biased stretch (low complexity) spans 15–27 (APAGPALGLPSPE). The segment at 15–43 (APAGPALGLPSPEVESGLERGEPEPMEVE) is disordered. Phosphoserine is present on serine 25. Residue lysine 70 forms a Glycyl lysine isopeptide (Lys-Gly) (interchain with G-Cter in SUMO2) linkage. A Phosphoserine modification is found at serine 73. An RNA recognition motif (RRM) domain region spans residues 126-187 (ETIYICGVDE…MSSLPAQDKM (62 aa)). A WLDD motif; essential for 7-methylguanosine-containing mRNA cap binding motif is present at residues 155 to 158 (WLDD). Disordered regions lie at residues 182–233 (PAQD…LDTL) and 332–400 (HSGL…MDYD). A compositionally biased stretch (basic and acidic residues) spans 185-208 (DKMRSRDASEDKSSEKNKKDKQED). Residue lysine 186 forms a Glycyl lysine isopeptide (Lys-Gly) (interchain with G-Cter in SUMO2) linkage. 2 positions are modified to phosphoserine: serine 209 and serine 210. Composition is skewed to acidic residues over residues 209–230 (SSDD…DVEL) and 341–360 (EPIE…DMDA). The segment covering 361-383 (DDRVVVEYHEELPGLKQPRERSL) has biased composition (basic and acidic residues). Residue threonine 408 is modified to Phosphothreonine. Serine 410 is modified (phosphoserine). Disordered stretches follow at residues 430–454 (SIRN…NKLP) and 467–615 (EKRQ…EAES). The segment covering 506–516 (VRREPSSDVHS) has biased composition (basic and acidic residues). A Glycyl lysine isopeptide (Lys-Gly) (interchain with G-Cter in SUMO2) cross-link involves residue lysine 536. 2 stretches are compositionally biased toward basic and acidic residues: residues 549–564 (KTKE…RASG) and 580–593 (IKEK…KSRL). Serine 563 bears the Phosphoserine mark. Residues 606-615 (ESSSGSEAES) show a composition bias toward low complexity. Phosphoserine is present on serine 615.

This sequence belongs to the NCBP3 family. Component of an alternative cap-binding complex (CBC) composed of NCBP1/CBP80 and NCBP3. Interacts with SRRT, KPNA3, THOC5 and EIF4A3.

The protein resides in the nucleus. Its subcellular location is the cytoplasm. Associates with NCBP1/CBP80 to form an alternative cap-binding complex (CBC) which plays a key role in mRNA export. NCBP3 serves as adapter protein linking the capped RNAs (m7GpppG-capped RNA) to NCBP1/CBP80. Unlike the conventional CBC with NCBP2 which binds both small nuclear RNA (snRNA) and messenger (mRNA) and is involved in their export from the nucleus, the alternative CBC with NCBP3 does not bind snRNA and associates only with mRNA thereby playing a role in only mRNA export. The alternative CBC is particularly important in cellular stress situations such as virus infections and the NCBP3 activity is critical to inhibit virus growth. The polypeptide is Nuclear cap-binding protein subunit 3 (Mus musculus (Mouse)).